Here is a 116-residue protein sequence, read N- to C-terminus: Co-chaperonin GroES (116 aa).

The protein belongs to the GroES chaperonin family. Heptamer of 7 subunits arranged in a ring. Interacts with the chaperonin GroEL.

The protein localises to the cytoplasm. Functionally, together with the chaperonin GroEL, plays an essential role in assisting protein folding. The GroEL-GroES system forms a nano-cage that allows encapsulation of the non-native substrate proteins and provides a physical environment optimized to promote and accelerate protein folding. GroES binds to the apical surface of the GroEL ring, thereby capping the opening of the GroEL channel. In Mycoplasma pneumoniae (strain ATCC 29342 / M129 / Subtype 1) (Mycoplasmoides pneumoniae), this protein is Co-chaperonin GroES.